A 504-amino-acid polypeptide reads, in one-letter code: Anaerobic nitric oxide reductase transcription regulator NorR (504 aa).

Asp-57 carries the post-translational modification 4-aspartylphosphate. Positions 187-416 constitute a Sigma-54 factor interaction domain; it reads MIGLSPGMTQ…LEHAIHRAVV (230 aa). ATP-binding positions include 215 to 222 and 278 to 287; these read GETGTGKE and ADNGTLFLDE. The H-T-H motif DNA-binding region spans 479–498; that stretch reads WAACARMLETDVANLHRLAK.

The protein operates within nitrogen metabolism; nitric oxide reduction. In terms of biological role, required for the expression of anaerobic nitric oxide (NO) reductase, acts as a transcriptional activator for at least the norVW operon. Activation also requires sigma-54. In Escherichia coli O45:K1 (strain S88 / ExPEC), this protein is Anaerobic nitric oxide reductase transcription regulator NorR.